Reading from the N-terminus, the 406-residue chain is Imidazolonepropionase (406 aa).

Positions 72 and 74 each coordinate Fe(3+). Zn(2+) is bound by residues H72 and H74. 3 residues coordinate 4-imidazolone-5-propanoate: R81, Y144, and H177. N-formimidoyl-L-glutamate is bound at residue Y144. H242 is a binding site for Fe(3+). A Zn(2+)-binding site is contributed by H242. Q245 contacts 4-imidazolone-5-propanoate. D317 contacts Fe(3+). D317 is a Zn(2+) binding site. N-formimidoyl-L-glutamate contacts are provided by N319 and G321. T322 is a 4-imidazolone-5-propanoate binding site.

It belongs to the metallo-dependent hydrolases superfamily. HutI family. Requires Zn(2+) as cofactor. Fe(3+) serves as cofactor.

Its subcellular location is the cytoplasm. It catalyses the reaction 4-imidazolone-5-propanoate + H2O = N-formimidoyl-L-glutamate. Its pathway is amino-acid degradation; L-histidine degradation into L-glutamate; N-formimidoyl-L-glutamate from L-histidine: step 3/3. In terms of biological role, catalyzes the hydrolytic cleavage of the carbon-nitrogen bond in imidazolone-5-propanoate to yield N-formimidoyl-L-glutamate. It is the third step in the universal histidine degradation pathway. This Yersinia enterocolitica serotype O:8 / biotype 1B (strain NCTC 13174 / 8081) protein is Imidazolonepropionase.